The following is a 132-amino-acid chain: Agouti-signaling protein (132 aa).

The first 22 residues, 1–22 (MDVTXLLLATLLVFLCCFAAYS), serve as a signal peptide directing secretion. The N-linked (GlcNAc...) asparagine glycan is linked to asparagine 39. A disordered region spans residues 62–93 (ISRKEAENKRSSKKEASKQKVARPRTPLSVPC). Over residues 64–79 (RKEAENKRSSKKEASK) the composition is skewed to basic and acidic residues. 5 disulfide bridges follow: cysteine 93–cysteine 108, cysteine 100–cysteine 114, cysteine 107–cysteine 125, cysteine 111–cysteine 132, and cysteine 116–cysteine 123. The 40-residue stretch at 93–132 (CVSTRGSCKPPAPACCHPCASCQCRFFRSACSCRVINVNC) folds into the Agouti domain.

Its subcellular location is the secreted. Functionally, involved in the regulation of melanogenesis. The binding of ASP to MC1R precludes alpha-MSH initiated signaling and thus blocks production of cAMP, leading to a down-regulation of eumelanogenesis (brown/black pigment) and thus increasing synthesis of pheomelanin (yellow/red pigment). The polypeptide is Agouti-signaling protein (ASIP) (Leontopithecus chrysomelas (Golden-headed lion tamarin)).